Consider the following 362-residue polypeptide: 5'-tyrosyl-DNA phosphodiesterase (362 aa).

A compositionally biased stretch (acidic residues) spans 1–10; it reads MSNSDDEIQE. Residues 1–43 form a disordered region; sequence MSNSDDEIQEIEAKRQKMSQEDSEVEIEILDEPEQGKLKNSSM. Over residues 11 to 20 the composition is skewed to basic and acidic residues; sequence IEAKRQKMSQ. A compositionally biased stretch (acidic residues) spans 21 to 33; sequence EDSEVEIEILDEP. The segment at 126-130 is interaction with 5' end of substrate DNA; sequence NIDGL. Mg(2+) is bound by residues Asp128 and Glu158. The interval 232–237 is interaction with 5' end of substrate DNA; sequence HLESTR. Asp271 (proton donor/acceptor) is an active-site residue. The tract at residues 273-275 is interaction with 5' end of substrate DNA; sequence NLR.

Belongs to the CCR4/nocturin family. TTRAP/TDP2 subfamily. In terms of assembly, interacts with mxl-1; the interaction promotes axon regeneration after injury. Interacts with ets-4; the interaction is required for the sumoylation of ets-4. It depends on Mg(2+) as a cofactor. Mn(2+) serves as cofactor.

The protein localises to the nucleus. It is found in the PML body. In terms of biological role, DNA repair enzyme that can remove a variety of covalent adducts from DNA through hydrolysis of a 5'-phosphodiester bond, giving rise to DNA with a free 5' phosphate. Catalyzes the hydrolysis of dead-end complexes between DNA and the topoisomerase 2 (top2) active site tyrosine residue. Hydrolyzes 5'-phosphoglycolates on protruding 5' ends on DNA double-strand breaks (DSBs) due to DNA damage by radiation and free radicals. Inhibits axon regeneration after neuronal injury by promoting the sumoylation of ets-4, thereby inhibiting the phosphorylation of ets-4 required for probable interaction with cebp-1 and activation of svh-2 expression. The protein is 5'-tyrosyl-DNA phosphodiesterase of Caenorhabditis elegans.